Consider the following 204-residue polypeptide: Wound-induced proteinase inhibitor 2 (204 aa).

Residues 1-25 (MAVPKEVSFLASLLVLGILLLHVDA) form the signal peptide. Tandem repeats lie at residues 25–67 (AKAC…DPNN), 68–125 (PKPC…DPNN), and 126–183 (PKPC…DPNH). 6 disulfides stabilise this stretch: C28/C100, C38/C75, C41/C59, C42/C71, C48/C84, and C99/C117. Residues 184-204 (PKACPKNCDPNIAYSLCLYEK) form a 4; truncated repeat.

Belongs to the protease inhibitor I20 (potato type II proteinase inhibitor) family.

This chain is Wound-induced proteinase inhibitor 2 (PIN2), found in Capsicum annuum (Capsicum pepper).